Here is a 244-residue protein sequence, read N- to C-terminus: 14-3-3 protein beta/alpha (244 aa).

At M1 the chain carries N-acetylmethionine. S184 carries the post-translational modification Phosphoserine.

The protein belongs to the 14-3-3 family. Homodimer, and heterodimer with other family members. Phosphorylated.

Its subcellular location is the cytoplasm. Functionally, adapter protein implicated in the regulation of a large spectrum of both general and specialized signaling pathways. Binds to a large number of partners, usually by recognition of a phosphoserine or phosphothreonine motif. Binding generally results in the modulation of the activity of the binding partner. This chain is 14-3-3 protein beta/alpha (YWHAB), found in Gallus gallus (Chicken).